We begin with the raw amino-acid sequence, 382 residues long: Galactokinase (382 aa).

Position 34–37 (Glu-34–Asp-37) interacts with substrate. ATP is bound at residue Gly-124–Ser-130. Mg(2+) contacts are provided by Ser-130 and Glu-162. Catalysis depends on Asp-174, which acts as the Proton acceptor. Tyr-223 contributes to the substrate binding site.

Belongs to the GHMP kinase family. GalK subfamily.

The protein resides in the cytoplasm. It catalyses the reaction alpha-D-galactose + ATP = alpha-D-galactose 1-phosphate + ADP + H(+). Its pathway is carbohydrate metabolism; galactose metabolism. Catalyzes the transfer of the gamma-phosphate of ATP to D-galactose to form alpha-D-galactose-1-phosphate (Gal-1-P). The polypeptide is Galactokinase (Shigella flexneri).